We begin with the raw amino-acid sequence, 628 residues long: Cystathionine gamma-synthase-like enzyme iboG2 (628 aa).

Y313 contacts substrate. Residue K417 is modified to N6-(pyridoxal phosphate)lysine.

Belongs to the trans-sulfuration enzymes family. Pyridoxal 5'-phosphate is required as a cofactor.

It functions in the pathway secondary metabolite biosynthesis. Functionally, cystathionine gamma-synthase-like enzyme; part of the gene cluster that mediates the biosynthesis of the psychoactive metabolites ibotenic acid and muscimol. The first committed step is glutamate hydroxylation by the 2-oxoglutarate-dependent dioxygenase iboH, and the last step is decarboxylation of ibotenic acid to muscimol by the decarboxylase iboD. The order of the intermediate reactions is somewhat ambiguous. IboA likely activates the carboxylic acid at position 5 to introduce an amide bond, and the flavin monooxygenase iboF generates the N-O bond. There are several options for the latter step. One option is that iboF directly hydroxylates the amide nitrogen formed by iboA to produce a hydroxamic acid species. Another option is that iboF hydroxylates an external N-containing compound, whose resulting N-O bond is subsequently introduced into the hydroxyglutamate scaffold. The paralogous PLP-dependent cystathionine gamma-synthase-like enzymes iboG1 and iboG2 are likely involved in substitution of the OH group at position 3 by the O-N moiety. The first cyclic intermediate is most probably tricholomic acid which is likely desaturated to ibotenic acid by the cytochrome P450 monooxygenase iboC. The chain is Cystathionine gamma-synthase-like enzyme iboG2 from Amanita muscaria (strain Koide BX008).